The primary structure comprises 121 residues: Protein VraC (121 aa).

In Staphylococcus aureus (strain MRSA252), this protein is Protein VraC (vraC).